A 481-amino-acid chain; its full sequence is MQVADKTVVIAGLGVSGTSLAEVLRERGAHVIGVDERKPEADLRSFDDVDWDHVDYVMSSPVFNPRTPFVLEAQRRGIPVMSEVEFAWQLRVNNERTGTPAPWIGITGTNGKTSTTEMTSEMLTACGLDAPTAGNIASGDMSMSLSRCATNPQHDVLCVELSSFQLHFTDSLALDCAAITNIADDHLDWHGGRENYAADKSKVFHNAKHAIVYNAQDAKVSELAAEAQTAEGCRKVGFTLEAPQAGQIGIEDGWIVDRSGVAGGAVGEPVRLAAITDFTHLAEPDGSLYPHLVADALTALALVLGLGADRDTALKALTSFKPGGHRIETVAEAVVEGGSVRFVDDSKATNGHAARASLSSFPAKSVIWIAGGLAKGSRFEDLVKDQAHTIKAAVIIGKDQQPMIEAFASQAPDIPVTIIDPEDNDTVMDRAVEACGTYAAAGDIVLMAPACASMDQFKSYADRGNRFAAAAKTWSEVHGLH.

108–114 serves as a coordination point for ATP; sequence GTNGKTS.

It belongs to the MurCDEF family.

It localises to the cytoplasm. The catalysed reaction is UDP-N-acetyl-alpha-D-muramoyl-L-alanine + D-glutamate + ATP = UDP-N-acetyl-alpha-D-muramoyl-L-alanyl-D-glutamate + ADP + phosphate + H(+). Its pathway is cell wall biogenesis; peptidoglycan biosynthesis. Cell wall formation. Catalyzes the addition of glutamate to the nucleotide precursor UDP-N-acetylmuramoyl-L-alanine (UMA). This Bifidobacterium longum subsp. infantis (strain ATCC 15697 / DSM 20088 / JCM 1222 / NCTC 11817 / S12) protein is UDP-N-acetylmuramoylalanine--D-glutamate ligase.